The following is a 726-amino-acid chain: Type VI secretion system spike protein VgrG1c (726 aa).

The segment at 502–522 (ANATQSGTKSRSSKGGTPANF) is disordered. The span at 507–518 (SGTKSRSSKGGT) shows a compositional bias: low complexity.

This sequence belongs to the VgrG protein family. As to quaternary structure, forms homomultimers. Part of the type VI secretion system (T6SS).

The protein localises to the secreted. In terms of biological role, part of the H1 type VI secretion system (H1-T6SS) specialized secretion system, which delivers several virulence factors in both prokaryotic and eukaryotic cells during infection. Allows the delivery of the Tse5/RhsP1 toxin to target cells where it exerts its toxicity. In Pseudomonas aeruginosa (strain ATCC 15692 / DSM 22644 / CIP 104116 / JCM 14847 / LMG 12228 / 1C / PRS 101 / PAO1), this protein is Type VI secretion system spike protein VgrG1c.